We begin with the raw amino-acid sequence, 388 residues long: MTRSVWLKADDAVGDWEARKRRITAGLEAGVDWVLVDERDVSRVRELGQVNVAAFAGDDVHVMDAEEQPDAEPDAVIVGKEGEGDGTVDLPSDFSGSADLTTLRRAEAPAGAYVRILDQDYESFAETAAVDADYTIVIGDDWQIIPLENLIARIGDETDLIAGVQTAEEAETAFETLELGADAVLLDTDNPDEIRATVEARDATERETLDLQRATVTEIEETGSADRVCVDTASMLEHDEGMLVGSMSRGLFFVHAETADSPYVASRPFRVNAGAVHAYVRTPDGGTKYLAELSSGDEVQVVDTDGNTREAIVGRAKIEKRPMFRIEAELENGDRIETLLQNAETIKVATDEGRRSVTELEAGDELLIYYEDVARHFGEAVEESIIEK.

This sequence belongs to the archaeal-type DHQ synthase family.

It catalyses the reaction 2-amino-2,3,7-trideoxy-D-lyxo-hept-6-ulosonate + NAD(+) + H2O = 3-dehydroquinate + NH4(+) + NADH + H(+). Functionally, catalyzes the oxidative deamination and cyclization of 2-amino-3,7-dideoxy-D-threo-hept-6-ulosonic acid (ADH) to yield 3-dehydroquinate (DHQ), which is fed into the canonical shikimic pathway of aromatic amino acid biosynthesis. The polypeptide is 3-dehydroquinate synthase (Natronomonas pharaonis (strain ATCC 35678 / DSM 2160 / CIP 103997 / JCM 8858 / NBRC 14720 / NCIMB 2260 / Gabara) (Halobacterium pharaonis)).